Consider the following 396-residue polypeptide: NADH-quinone oxidoreductase subunit D (396 aa).

Belongs to the complex I 49 kDa subunit family. NDH-1 is composed of 14 different subunits. Subunits NuoB, C, D, E, F, and G constitute the peripheral sector of the complex.

The protein localises to the cell inner membrane. The enzyme catalyses a quinone + NADH + 5 H(+)(in) = a quinol + NAD(+) + 4 H(+)(out). Functionally, NDH-1 shuttles electrons from NADH, via FMN and iron-sulfur (Fe-S) centers, to quinones in the respiratory chain. The immediate electron acceptor for the enzyme in this species is believed to be ubiquinone. Couples the redox reaction to proton translocation (for every two electrons transferred, four hydrogen ions are translocated across the cytoplasmic membrane), and thus conserves the redox energy in a proton gradient. This chain is NADH-quinone oxidoreductase subunit D, found in Orientia tsutsugamushi (strain Boryong) (Rickettsia tsutsugamushi).